A 237-amino-acid polypeptide reads, in one-letter code: Undecaprenyl-diphosphatase (237 aa).

7 helical membrane passes run 38–58, 65–85, 92–112, 126–146, 166–186, 191–211, and 217–237; these read QTAV…LDGI, WRII…GVLF, LFSS…ILMF, MSFL…FPGI, ALQY…ILGL, VTIL…YVLS, and GKIW…YLAG.

The protein belongs to the UppP family.

Its subcellular location is the cell inner membrane. The catalysed reaction is di-trans,octa-cis-undecaprenyl diphosphate + H2O = di-trans,octa-cis-undecaprenyl phosphate + phosphate + H(+). Catalyzes the dephosphorylation of undecaprenyl diphosphate (UPP). Confers resistance to bacitracin. The sequence is that of Undecaprenyl-diphosphatase from Thermotoga maritima (strain ATCC 43589 / DSM 3109 / JCM 10099 / NBRC 100826 / MSB8).